A 325-amino-acid polypeptide reads, in one-letter code: Protein FAM50B (325 aa).

N-acetylalanine is present on Ala2. 2 disordered regions span residues 92–111 (QHLEEQRLQQERQREQEQRR) and 137–160 (RRAGNLGKNPDVDTSFLPDRDREE).

This sequence belongs to the FAM50 family. Widely expressed. Mostly abundant in testis and adult and fetal brain.

This chain is Protein FAM50B (FAM50B), found in Homo sapiens (Human).